The primary structure comprises 265 residues: UPF0246 protein NT01EI_0662 (265 aa).

The protein belongs to the UPF0246 family.

This chain is UPF0246 protein NT01EI_0662, found in Edwardsiella ictaluri (strain 93-146).